The primary structure comprises 244 residues: MRTKYLIGNWKTNKDLHQALAFVEQFKQHPAKTKAVLGIAPVHVHLTEVNKVLPNNLLLLAQDANFIASGSYTGTVSYTQLQDIKVNSVIIGHSERRKYFNETAQVINQKLKACLQAGMLVVLCIGETEGQPISFLKEDLTQVLQGIDLSLLKQLVIAYEPIWAIGTGKTATPEIANNTIAQIRVYLSELYNKEIAQQTSILYGGSVAKDNIKELAQTEQIDGFLVGKASLDVNDFLVMAQVYA.

9 to 11 serves as a coordination point for substrate; it reads NWK. His-93 (electrophile) is an active-site residue. Glu-160 serves as the catalytic Proton acceptor. 2 residues coordinate substrate: Gly-166 and Ser-206.

The protein belongs to the triosephosphate isomerase family. As to quaternary structure, homodimer.

Its subcellular location is the cytoplasm. It catalyses the reaction D-glyceraldehyde 3-phosphate = dihydroxyacetone phosphate. It participates in carbohydrate biosynthesis; gluconeogenesis. The protein operates within carbohydrate degradation; glycolysis; D-glyceraldehyde 3-phosphate from glycerone phosphate: step 1/1. Involved in the gluconeogenesis. Catalyzes stereospecifically the conversion of dihydroxyacetone phosphate (DHAP) to D-glyceraldehyde-3-phosphate (G3P). The polypeptide is Triosephosphate isomerase (Mycoplasma pneumoniae (strain ATCC 29342 / M129 / Subtype 1) (Mycoplasmoides pneumoniae)).